A 387-amino-acid chain; its full sequence is MDLFEYQAKELFAKHNVPSTPGRVTDTAEGAKAIATEIGRPVMVKAQVKIGGRGKAGGVKYAATPQDAYEHAKNILGLDIKGHIVKKLLVAEASDIAEEYYLSFLLDRANRTYLAMCSVEGGMEIEEVAATKPERLAKVPVNAVKGVDLDFARSIAEQGHLPAEVLDTAAVTIAKLWELFVAEDATLVEVNPLVRTPDHKILALDAKITLDGNADFRQPGHAEFEDRAATDPLELKAKEHDLNYVKLDGQVGIIGNGAGLAMSTLDVVAYAGEKHGGVKPANFLDIGGGASAEVMAAGLDVVLGDQQVKSVFVNVFGGITSCDAVATGIVKALGMLGDEANKPLVVRLDGNNVEEGRRILTEANHPLVTLVATMDEAADKAAELASA.

The ATP-grasp domain maps to 9-236 (KELFAKHNVP…RAATDPLELK (228 aa)). Residues lysine 45, 52 to 54 (GRG), serine 94, and glutamate 99 each bind ATP. 2 residues coordinate Mg(2+): asparagine 191 and aspartate 205. Substrate is bound by residues asparagine 256 and 318–320 (GIT).

This sequence belongs to the succinate/malate CoA ligase beta subunit family. As to quaternary structure, heterotetramer of two alpha and two beta subunits. It depends on Mg(2+) as a cofactor.

It catalyses the reaction succinate + ATP + CoA = succinyl-CoA + ADP + phosphate. It carries out the reaction GTP + succinate + CoA = succinyl-CoA + GDP + phosphate. It functions in the pathway carbohydrate metabolism; tricarboxylic acid cycle; succinate from succinyl-CoA (ligase route): step 1/1. Succinyl-CoA synthetase functions in the citric acid cycle (TCA), coupling the hydrolysis of succinyl-CoA to the synthesis of either ATP or GTP and thus represents the only step of substrate-level phosphorylation in the TCA. The beta subunit provides nucleotide specificity of the enzyme and binds the substrate succinate, while the binding sites for coenzyme A and phosphate are found in the alpha subunit. This chain is Succinate--CoA ligase [ADP-forming] subunit beta, found in Mycobacterium bovis (strain ATCC BAA-935 / AF2122/97).